Reading from the N-terminus, the 453-residue chain is Ribulose bisphosphate carboxylase large chain (453 aa).

A propeptide spanning residues 1–2 is cleaved from the precursor; that stretch reads MS. N-acetylproline is present on Pro-3. At Lys-14 the chain carries N6,N6,N6-trimethyllysine. Asn-123 and Thr-173 together coordinate substrate. Lys-175 acts as the Proton acceptor in catalysis. Lys-177 serves as a coordination point for substrate. Residues Lys-201, Asp-203, and Glu-204 each coordinate Mg(2+). N6-carboxylysine is present on Lys-201. His-294 (proton acceptor) is an active-site residue. Substrate-binding residues include Arg-295, His-327, and Ser-379.

It belongs to the RuBisCO large chain family. Type I subfamily. Heterohexadecamer of 8 large chains and 8 small chains; disulfide-linked. The disulfide link is formed within the large subunit homodimers. Mg(2+) serves as cofactor. The disulfide bond which can form in the large chain dimeric partners within the hexadecamer appears to be associated with oxidative stress and protein turnover.

It localises to the plastid. The protein resides in the chloroplast. The enzyme catalyses 2 (2R)-3-phosphoglycerate + 2 H(+) = D-ribulose 1,5-bisphosphate + CO2 + H2O. The catalysed reaction is D-ribulose 1,5-bisphosphate + O2 = 2-phosphoglycolate + (2R)-3-phosphoglycerate + 2 H(+). Functionally, ruBisCO catalyzes two reactions: the carboxylation of D-ribulose 1,5-bisphosphate, the primary event in carbon dioxide fixation, as well as the oxidative fragmentation of the pentose substrate in the photorespiration process. Both reactions occur simultaneously and in competition at the same active site. The sequence is that of Ribulose bisphosphate carboxylase large chain from Galium palustre (Common marsh bedstraw).